The primary structure comprises 186 residues: Ribosome maturation factor RimM (186 aa).

The 83-residue stretch at 100 to 182 folds into the PRC barrel domain; it reads NEGEYHVSDL…RIEINPPVGL (83 aa).

The protein belongs to the RimM family. In terms of assembly, binds ribosomal protein uS19.

It localises to the cytoplasm. Its function is as follows. An accessory protein needed during the final step in the assembly of 30S ribosomal subunit, possibly for assembly of the head region. Essential for efficient processing of 16S rRNA. May be needed both before and after RbfA during the maturation of 16S rRNA. It has affinity for free ribosomal 30S subunits but not for 70S ribosomes. The chain is Ribosome maturation factor RimM from Rippkaea orientalis (strain PCC 8801 / RF-1) (Cyanothece sp. (strain PCC 8801)).